We begin with the raw amino-acid sequence, 339 residues long: Aspartate carbamoyltransferase catalytic subunit (339 aa).

Carbamoyl phosphate-binding residues include Arg-69 and Thr-70. An L-aspartate-binding site is contributed by Lys-97. The carbamoyl phosphate site is built by Arg-119, His-149, and Gln-152. 2 residues coordinate L-aspartate: Arg-182 and Arg-237. Gly-278 and Pro-279 together coordinate carbamoyl phosphate.

The protein belongs to the aspartate/ornithine carbamoyltransferase superfamily. ATCase family. As to quaternary structure, heterododecamer (2C3:3R2) of six catalytic PyrB chains organized as two trimers (C3), and six regulatory PyrI chains organized as three dimers (R2).

The catalysed reaction is carbamoyl phosphate + L-aspartate = N-carbamoyl-L-aspartate + phosphate + H(+). Its pathway is pyrimidine metabolism; UMP biosynthesis via de novo pathway; (S)-dihydroorotate from bicarbonate: step 2/3. Functionally, catalyzes the condensation of carbamoyl phosphate and aspartate to form carbamoyl aspartate and inorganic phosphate, the committed step in the de novo pyrimidine nucleotide biosynthesis pathway. The sequence is that of Aspartate carbamoyltransferase catalytic subunit from Hydrogenovibrio crunogenus (strain DSM 25203 / XCL-2) (Thiomicrospira crunogena).